The sequence spans 75 residues: MREITESQLRYISGAGGAPATSANAAGAAAIVGALAGIPGGPLGVVVGAVSAGLTTAIGSTVGSGSASSSAGGGS.

Residues 1 to 15 (MREITESQLRYISGA) constitute a propeptide that is removed on maturation. Residues 30–50 (AIVGALAGIPGGPLGVVVGAV) form a helical membrane-spanning segment.

The protein resides in the secreted. The protein localises to the host cell membrane. Its function is as follows. Bactericidal antibiotic. Active on bacteria phylogenetically related to the producing strain. This Escherichia coli O6:H1 (strain CFT073 / ATCC 700928 / UPEC) protein is Microcin H47 (mchB).